A 426-amino-acid chain; its full sequence is UPF0229 protein Csal_0882 (426 aa).

Residues 82-93 are compositionally biased toward basic and acidic residues; the sequence is FVEGDRLRRPGG. The tract at residues 82-109 is disordered; the sequence is FVEGDRLRRPGGEGRGGSGEGSASNQGE.

This sequence belongs to the UPF0229 family.

This is UPF0229 protein Csal_0882 from Chromohalobacter salexigens (strain ATCC BAA-138 / DSM 3043 / CIP 106854 / NCIMB 13768 / 1H11).